Consider the following 497-residue polypeptide: MERREGGRDNSSCSNVNQLFGVKDSESLLYDDVFIVRDRNGDSYFAYWDIEKNTFLSEPFYSYRSRNSSYLPKIKAFMSEDRSQIHEVKNGFRSEDHSKINKINGVENLFHNYNMNVLTDDYNFKMGMNGFHRPQSKIHINRFIDSYLQSQICIATTPGSGSDNDSYIHGSRVYGESESYTRSEGRSSSIRTRTKGVELTLRERPGILDRTKKYMYLWLQCDNCYGLNYKKVLKSKMTICEQCGYHLQMSSSDRIELLIDPGTWDPMDEDMVSRDPIKFDSGGGEAYKDRLYFYQRKTGLTEAVQTGIGQLNGIPVAIGVMDFKFMGGSMGSVVGEKITRLIEHATNKFLPLIIVSASGGARMQEGSLSLMQMAKISSALYDYQSNKRLVYVSILTSPTAGGVTASFGMLGDIIIVEPRAYVAFAGKRVIEQTLNQTIPNDSQEAEFLFHKGLFDLIIPRHLLKSVISELFTLHDLFPLNQNSNQYSQYRALLNPIF.

The region spanning 217 to 489 (LWLQCDNCYG…NQNSNQYSQY (273 aa)) is the CoA carboxyltransferase N-terminal domain. Residues C221, C224, C240, and C243 each contribute to the Zn(2+) site. Residues 221–243 (CDNCYGLNYKKVLKSKMTICEQC) form a C4-type zinc finger.

It belongs to the AccD/PCCB family. As to quaternary structure, acetyl-CoA carboxylase is a heterohexamer composed of biotin carboxyl carrier protein, biotin carboxylase and 2 subunits each of ACCase subunit alpha and ACCase plastid-coded subunit beta (accD). Zn(2+) serves as cofactor.

It is found in the plastid. The enzyme catalyses N(6)-carboxybiotinyl-L-lysyl-[protein] + acetyl-CoA = N(6)-biotinyl-L-lysyl-[protein] + malonyl-CoA. It participates in lipid metabolism; malonyl-CoA biosynthesis; malonyl-CoA from acetyl-CoA: step 1/1. Component of the acetyl coenzyme A carboxylase (ACC) complex. Biotin carboxylase (BC) catalyzes the carboxylation of biotin on its carrier protein (BCCP) and then the CO(2) group is transferred by the transcarboxylase to acetyl-CoA to form malonyl-CoA. This is Acetyl-coenzyme A carboxylase carboxyl transferase subunit beta from Cuscuta reflexa (Southern Asian dodder).